The chain runs to 523 residues: 2-isopropylmalate synthase (523 aa).

Residues 5–267 (VIIFDTTLRD…ETGINAKEIH (263 aa)) form the Pyruvate carboxyltransferase domain. Residues D14, H202, H204, and N238 each contribute to the Mn(2+) site. Residues 392–523 (GLQQLVVHSD…KQARTELGGV (132 aa)) are regulatory domain.

It belongs to the alpha-IPM synthase/homocitrate synthase family. LeuA type 1 subfamily. In terms of assembly, homodimer. The cofactor is Mn(2+).

The protein resides in the cytoplasm. The enzyme catalyses 3-methyl-2-oxobutanoate + acetyl-CoA + H2O = (2S)-2-isopropylmalate + CoA + H(+). It participates in amino-acid biosynthesis; L-leucine biosynthesis; L-leucine from 3-methyl-2-oxobutanoate: step 1/4. In terms of biological role, catalyzes the condensation of the acetyl group of acetyl-CoA with 3-methyl-2-oxobutanoate (2-ketoisovalerate) to form 3-carboxy-3-hydroxy-4-methylpentanoate (2-isopropylmalate). The protein is 2-isopropylmalate synthase of Shewanella loihica (strain ATCC BAA-1088 / PV-4).